The sequence spans 567 residues: Unguisins hydrolase ungD (567 aa).

It belongs to the peptidase S12 family.

It functions in the pathway secondary metabolite biosynthesis. In terms of biological role, hydrolase; part of the gene cluster that mediates the biosynthesis of the unguisins, gamma-aminobutyric acid (GABA)-containing fungal cyclic heptapeptides with the amino acid sequence cyclo-(D-Ala1-D-Val2-L-Phe3-D-Val4-D-Ala5-D-Trp6-GABA7) for unguisin A and cyclo-(D-Ala1-D-Val2-L-Leu3-D-Val4-D-Ala5-D-Trp6-GABA7) for unguisin B. Within the pathway, the hydrolase ungD catalyzes the hydrolysis between the D-tryptophan and GABA residues of unguisins A and B to produce the corresponding linear peptides. The alanine racemase ungC catalyzes the interconversion of L-alanine and D-alanine, providing the D-alanine which is accepted by the first adenylation domain of the nonribosomal peptide synthetase (NRPS) ungA. UngA is the main enzyme within the cluster which condenses the 7 residues using its respective 7 modules. The terminal condensation domain (Ct) is involved in cyclization with D-alanine and thereby releasing of unguisins A and B. This Aspergillus violaceofuscus (strain CBS 115571) protein is Unguisins hydrolase ungD.